Reading from the N-terminus, the 208-residue chain is ATP synthase subunit b (208 aa).

Residues 1–27 (MVKAKKLVFKWSLLVFSFFTLSLFLVS) form the signal peptide. A lipid anchor (N-palmitoyl cysteine) is attached at C28. A lipid anchor (S-diacylglycerol cysteine) is attached at C28. A helical membrane pass occupies residues 49–69 (WVFITHLLAFFILLTLMIFLF).

It belongs to the ATPase B chain family. As to quaternary structure, F-type ATPases have 2 components, F(1) - the catalytic core - and F(0) - the membrane proton channel. F(1) has five subunits: alpha(3), beta(3), gamma(1), delta(1), epsilon(1). F(0) has three main subunits: a(1), b(2) and c(10-14). The alpha and beta chains form an alternating ring which encloses part of the gamma chain. F(1) is attached to F(0) by a central stalk formed by the gamma and epsilon chains, while a peripheral stalk is formed by the delta and b chains.

The protein resides in the cell membrane. F(1)F(0) ATP synthase produces ATP from ADP in the presence of a proton or sodium gradient. F-type ATPases consist of two structural domains, F(1) containing the extramembraneous catalytic core and F(0) containing the membrane proton channel, linked together by a central stalk and a peripheral stalk. During catalysis, ATP synthesis in the catalytic domain of F(1) is coupled via a rotary mechanism of the central stalk subunits to proton translocation. Its function is as follows. Component of the F(0) channel, it forms part of the peripheral stalk, linking F(1) to F(0). This Mycoplasma genitalium (strain ATCC 33530 / DSM 19775 / NCTC 10195 / G37) (Mycoplasmoides genitalium) protein is ATP synthase subunit b.